Consider the following 234-residue polypeptide: Membrane glycoprotein RL11 (234 aa).

Positions 1-23 (MQTYSTPLTLIIVTSLFLFTTQG) are cleaved as a signal peptide. The helical transmembrane segment at 183 to 203 (LHCAWVSGLMIFVGALVICFL) threads the bilayer.

The protein localises to the host membrane. The sequence is that of Membrane glycoprotein RL11 (RL11) from Human cytomegalovirus (strain Merlin) (HHV-5).